A 543-amino-acid polypeptide reads, in one-letter code: Zinc metalloproteinase (543 aa).

The signal sequence occupies residues Met1 to Ala24. Residues Ala25–Thr207 constitute a propeptide that is removed on maturation. A Zn(2+)-binding site is contributed by His377. Glu378 is a catalytic residue. Residues His381 and Glu401 each contribute to the Zn(2+) site. The active-site Proton donor is His463.

Belongs to the peptidase M4 family. Zn(2+) serves as cofactor.

The protein resides in the secreted. Functionally, cleaves collagen, gelatin, casein, alpha-1-antitrypsin, and bovine insulin. May play a role in the pathogenesis of legionnaires disease. This Legionella pneumophila protein is Zinc metalloproteinase.